The sequence spans 501 residues: Lysine--tRNA ligase (501 aa).

Positions 411 and 418 each coordinate Mg(2+).

It belongs to the class-II aminoacyl-tRNA synthetase family. Homodimer. Requires Mg(2+) as cofactor.

Its subcellular location is the cytoplasm. The enzyme catalyses tRNA(Lys) + L-lysine + ATP = L-lysyl-tRNA(Lys) + AMP + diphosphate. The polypeptide is Lysine--tRNA ligase (Clostridium perfringens (strain ATCC 13124 / DSM 756 / JCM 1290 / NCIMB 6125 / NCTC 8237 / Type A)).